The following is a 113-amino-acid chain: Large ribosomal subunit protein bL19 (113 aa).

Belongs to the bacterial ribosomal protein bL19 family.

Its function is as follows. This protein is located at the 30S-50S ribosomal subunit interface and may play a role in the structure and function of the aminoacyl-tRNA binding site. The protein is Large ribosomal subunit protein bL19 of Carboxydothermus hydrogenoformans (strain ATCC BAA-161 / DSM 6008 / Z-2901).